Consider the following 420-residue polypeptide: MANVSPVHGGLSEPVNRVVDSLPSTELLPKIVVNATDYTTLHRIADGTLSPLTGPMTKADYDSVLLKKGIERDGKLWAWTIPLSLPVTAEEAKALKAGEPAALVSESGDVFGTLTVDAAFSWDKPAFLKAVYGTERTDHPGARLWLDDPRTDLVGGSISVLAHDEARPFKDRILYPQSMRALLKEQGYGASVAFQTRNPLHRAHEYALVYGAEKLLKEVGDSSKVGVFLNPLVGQLKGDDVPAATRMETYIKLIDGGFIGEGDMDEELWKSKGQNLREQTRLAGLDMRMFYGGPSEAVMHAIYRQNLGITHFIIGRKHADAPFDDKSAIWGDFDAQEIFEKLEGDLQIKTVNVGFAAYFEELGHVGLCSENKGKTTVSISGSKMREMLNSGSMPDSRVMRPATAQVLMDYYAAKNKSATA.

Ala2 is modified (N-acetylalanine).

It belongs to the sulfate adenylyltransferase family. Mg(2+) is required as a cofactor.

The catalysed reaction is sulfate + ATP + H(+) = adenosine 5'-phosphosulfate + diphosphate. Its pathway is sulfur metabolism; hydrogen sulfide biosynthesis; sulfite from sulfate: step 1/3. Inhibited by adenosine 5'-phosphosulfate (APS), but not by 3'phosphoadenosine 5'-phosphosulfate (PAPS). Inhibited by AMP, ADP, CTP, GTP, ITP, UTP and anions other than those in group IV. The chain is Sulfate adenylyltransferase from Pyropia yezoensis (Susabi-nori).